A 432-amino-acid chain; its full sequence is Transcobalamin-2 (432 aa).

Positions 1-18 (MGHLGALLFLLGGLGALA) are cleaved as a signal peptide. 3 disulfide bridges follow: Cys-21/Cys-270, Cys-116/Cys-312, and Cys-165/Cys-208. The N-linked (GlcNAc...) asparagine glycan is linked to Asn-94. Residues Gln-104, 152-156 (TSYYQ), His-193, 193-197 (HVSVD), Asn-245, Ser-248, Gln-294, and 400-402 (WQV) each bind cob(II)alamin.

The protein belongs to the eukaryotic cobalamin transport proteins family. In terms of assembly, interacts with CD320 (via LDL-receptor class A domains). Expressed in mammary gland, kidney, lymphatic nodes and liver.

The protein localises to the secreted. Functionally, primary vitamin B12-binding and transport protein. Delivers cobalamin to cells. In Bos taurus (Bovine), this protein is Transcobalamin-2 (TCN2).